The chain runs to 312 residues: Nucleosome assembly protein 1-like 4 (312 aa).

Residues 24-78 adopt a coiled-coil conformation; sequence VETLKNKLQALAEQHVDVLESLAPSVRKRVDVLMEIQSQHDELEVKFFEEKAALE. The Nuclear export signal motif lies at 45 to 60; it reads LAPSVRKRVDVLMEIQ. The tract at residues 289 to 312 is disordered; that stretch reads DYGASWVDDEEEDDNNDEYSDEEA.

The protein belongs to the nucleosome assembly protein (NAP) family.

Its subcellular location is the nucleus. It is found in the cytoplasm. Functionally, may modulate chromatin structure by regulation of nucleosome assembly/disassembly. This Oryza sativa subsp. japonica (Rice) protein is Nucleosome assembly protein 1-like 4.